Here is a 453-residue protein sequence, read N- to C-terminus: Proton extrusion protein PxcA (453 aa).

Positions 147–189 (SQDKETQTLDNKSTNQTNSKLSNNNKISSGQNDSRLESASQKT) are disordered. Over residues 154-163 (TLDNKSTNQT) the composition is skewed to polar residues. A compositionally biased stretch (low complexity) spans 164–175 (NSKLSNNNKISS). Residues 176–189 (GQNDSRLESASQKT) show a composition bias toward polar residues. The next 4 helical transmembrane spans lie at 235–255 (FILL…TFLL), 330–350 (SIGN…VIVS), 377–397 (LIIL…WEVI), and 413–433 (FNFL…KYWI).

It belongs to the CemA family.

It localises to the cell inner membrane. Its function is as follows. Required for H(+) efflux immediately after light irradiation to form a rapid H(+) concentration gradient across the thylakoid membranes. Together with PxcL, contributes to transient H(+) uptake following dark to light transition. The protein is Proton extrusion protein PxcA of Crocosphaera subtropica (strain ATCC 51142 / BH68) (Cyanothece sp. (strain ATCC 51142)).